Here is a 194-residue protein sequence, read N- to C-terminus: Large ribosomal subunit protein bL25 (194 aa).

It belongs to the bacterial ribosomal protein bL25 family. CTC subfamily. In terms of assembly, part of the 50S ribosomal subunit; part of the 5S rRNA/L5/L18/L25 subcomplex. Contacts the 5S rRNA. Binds to the 5S rRNA independently of L5 and L18.

In terms of biological role, this is one of the proteins that binds to the 5S RNA in the ribosome where it forms part of the central protuberance. The protein is Large ribosomal subunit protein bL25 of Thermobifida fusca (strain YX).